The primary structure comprises 209 residues: Ribosomal RNA large subunit methyltransferase E (209 aa).

Positions 63, 65, 83, 99, and 124 each coordinate S-adenosyl-L-methionine. The Proton acceptor role is filled by lysine 164.

This sequence belongs to the class I-like SAM-binding methyltransferase superfamily. RNA methyltransferase RlmE family.

It localises to the cytoplasm. The enzyme catalyses uridine(2552) in 23S rRNA + S-adenosyl-L-methionine = 2'-O-methyluridine(2552) in 23S rRNA + S-adenosyl-L-homocysteine + H(+). Its function is as follows. Specifically methylates the uridine in position 2552 of 23S rRNA at the 2'-O position of the ribose in the fully assembled 50S ribosomal subunit. The sequence is that of Ribosomal RNA large subunit methyltransferase E from Shewanella frigidimarina (strain NCIMB 400).